We begin with the raw amino-acid sequence, 291 residues long: Pyridoxal 5'-phosphate synthase subunit PdxS (291 aa).

D-ribose 5-phosphate is bound at residue aspartate 23. Residue lysine 80 is the Schiff-base intermediate with D-ribose 5-phosphate of the active site. Glycine 152 is a D-ribose 5-phosphate binding site. A D-glyceraldehyde 3-phosphate-binding site is contributed by arginine 164. D-ribose 5-phosphate-binding positions include glycine 213 and 234-235; that span reads GS.

This sequence belongs to the PdxS/SNZ family. In the presence of PdxT, forms a dodecamer of heterodimers.

The catalysed reaction is aldehydo-D-ribose 5-phosphate + D-glyceraldehyde 3-phosphate + L-glutamine = pyridoxal 5'-phosphate + L-glutamate + phosphate + 3 H2O + H(+). Its pathway is cofactor biosynthesis; pyridoxal 5'-phosphate biosynthesis. Functionally, catalyzes the formation of pyridoxal 5'-phosphate from ribose 5-phosphate (RBP), glyceraldehyde 3-phosphate (G3P) and ammonia. The ammonia is provided by the PdxT subunit. Can also use ribulose 5-phosphate and dihydroxyacetone phosphate as substrates, resulting from enzyme-catalyzed isomerization of RBP and G3P, respectively. This Haemophilus influenzae (strain PittGG) protein is Pyridoxal 5'-phosphate synthase subunit PdxS.